Consider the following 558-residue polypeptide: CTP synthase (558 aa).

An amidoligase domain region spans residues 1 to 270; sequence MTKYVFVTGG…DDLICRELDL (270 aa). Residue Ser13 participates in CTP binding. Ser13 is a binding site for UTP. Residues 14–19 and Asp71 contribute to the ATP site; that span reads SLGKGI. Asp71 and Glu144 together coordinate Mg(2+). CTP-binding positions include 151-153, 191-196, and Lys227; these read DIE and KTKPTQ. UTP is bound by residues 191 to 196 and Lys227; that span reads KTKPTQ. The Glutamine amidotransferase type-1 domain occupies 295-547; it reads TIGMVGKYVE…ISAALEHQKK (253 aa). Gly356 contributes to the L-glutamine binding site. Cys383 (nucleophile; for glutamine hydrolysis) is an active-site residue. L-glutamine-binding positions include 384 to 387, Glu407, and Arg473; that span reads LGMQ. Residues His520 and Glu522 contribute to the active site.

The protein belongs to the CTP synthase family. Homotetramer.

It carries out the reaction UTP + L-glutamine + ATP + H2O = CTP + L-glutamate + ADP + phosphate + 2 H(+). The enzyme catalyses L-glutamine + H2O = L-glutamate + NH4(+). The catalysed reaction is UTP + NH4(+) + ATP = CTP + ADP + phosphate + 2 H(+). It functions in the pathway pyrimidine metabolism; CTP biosynthesis via de novo pathway; CTP from UDP: step 2/2. Its activity is regulated as follows. Allosterically activated by GTP, when glutamine is the substrate; GTP has no effect on the reaction when ammonia is the substrate. The allosteric effector GTP functions by stabilizing the protein conformation that binds the tetrahedral intermediate(s) formed during glutamine hydrolysis. Inhibited by the product CTP, via allosteric rather than competitive inhibition. Its function is as follows. Catalyzes the ATP-dependent amination of UTP to CTP with either L-glutamine or ammonia as the source of nitrogen. Regulates intracellular CTP levels through interactions with the four ribonucleotide triphosphates. The polypeptide is CTP synthase (Polynucleobacter necessarius subsp. necessarius (strain STIR1)).